We begin with the raw amino-acid sequence, 372 residues long: PqqA peptide cyclase (372 aa).

The 217-residue stretch at 4 to 220 (APPPLSVLLE…ETARRQLGDR (217 aa)) folds into the Radical SAM core domain. 3 residues coordinate [4Fe-4S] cluster: C18, C22, and C25. Residues 342-372 (ATAEQESASPAPAFIYRRPERPAAATADPLE) are disordered.

It belongs to the radical SAM superfamily. PqqE family. Interacts with PqqD. The interaction is necessary for activity of PqqE. [4Fe-4S] cluster is required as a cofactor.

It carries out the reaction [PQQ precursor protein] + S-adenosyl-L-methionine = E-Y cross-linked-[PQQ precursor protein] + 5'-deoxyadenosine + L-methionine + H(+). It participates in cofactor biosynthesis; pyrroloquinoline quinone biosynthesis. Its function is as follows. Catalyzes the cross-linking of a glutamate residue and a tyrosine residue in the PqqA protein as part of the biosynthesis of pyrroloquinoline quinone (PQQ). The chain is PqqA peptide cyclase from Xanthomonas euvesicatoria pv. vesicatoria (strain 85-10) (Xanthomonas campestris pv. vesicatoria).